Consider the following 220-residue polypeptide: Competence protein ComFC (220 aa).

It belongs to the ComF/GntX family. Monomer and dimer in solution. Interacts with ComFA and DprA; ComFA-ComFC form rings about 150 Angstroms in diameter with apparent 6-fold symmetry.

Functionally, involved in transformation (genetic competence for DNA uptake). The polypeptide is Competence protein ComFC (Streptococcus pneumoniae (strain ATCC BAA-255 / R6)).